Here is a 35-residue protein sequence, read N- to C-terminus: Kappa-stichotoxin-She3a (35 aa).

A ShKT domain is found at 3–35 (CIDTIPKSRCTAFQCKHSMKYRLSFCRKTCGTC). 3 disulfides stabilise this stretch: Cys-3–Cys-35, Cys-12–Cys-28, and Cys-17–Cys-32.

The protein belongs to the sea anemone type 1 potassium channel toxin family. Type 1a subfamily.

The protein localises to the secreted. It is found in the nematocyst. Peptide with both antimicrobial and neurotoxin activities. Inhibits voltage-dependent potassium channels. Potently blocks Kv1.1/KCNA1 (IC(50)=6.7-87 pM) and Kv1.3/KCNA3 (IC(50)=10-250 pM). Less potently blocks Kv1.4/KCNA4 (IC(50)=0.31 nM), and Kv1.6/KCNA6 (IC(50)=0.16 nM). Shows moderate activity on Kv1.2/KCNA2 (IC(50)=9 nM), Kv1.7/KCNA7 (IC(50)=11.5 nM), and KCa3.1/KCNN4 (Kd=0.03-30 nM). Blocks Kv channels by binding to a shallow vestibule at the outer entrance to the ion conduction pathway and occluding the entrance to the pore. Shows antibacterial activity against all tested bacteria (the Gram-positive bacteria B.subtilis and S.aureus, and the Gram-negative bacteria S.typhimurium and P.aeruginosa). This Stichodactyla helianthus (Sun anemone) protein is Kappa-stichotoxin-She3a.